The following is a 218-amino-acid chain: Protein-methionine-sulfoxide reductase heme-binding subunit MsrQ (218 aa).

Helical transmembrane passes span 14 to 34, 60 to 80, 86 to 106, 121 to 141, and 155 to 175; these read AVHAAVLAPIALLGWQFWQVW, LLLITLAITPLRQLTGQAVLI, LGLYTFFYASVHLTAYLWLDL, PYITVGFTAWLLLVPLAITST, and LHMLIYPIGLLAVLHFWWLVK.

It belongs to the MsrQ family. Heterodimer of a catalytic subunit (MsrP) and a heme-binding subunit (MsrQ). FMN is required as a cofactor. The cofactor is heme b.

The protein localises to the cell inner membrane. Its function is as follows. Part of the MsrPQ system that repairs oxidized periplasmic proteins containing methionine sulfoxide residues (Met-O), using respiratory chain electrons. Thus protects these proteins from oxidative-stress damage caused by reactive species of oxygen and chlorine generated by the host defense mechanisms. MsrPQ is essential for the maintenance of envelope integrity under bleach stress, rescuing a wide series of structurally unrelated periplasmic proteins from methionine oxidation. MsrQ provides electrons for reduction to the reductase catalytic subunit MsrP, using the quinone pool of the respiratory chain. The sequence is that of Protein-methionine-sulfoxide reductase heme-binding subunit MsrQ from Xanthomonas campestris pv. campestris (strain B100).